We begin with the raw amino-acid sequence, 385 residues long: MDQCLQVAWIAGSDAITEQSNFIFSPMCLRAGLALLATGADGETLRQMLAFLGSEHIHQLNATSAGLLAEMQAWPQLVFAAGIFVDRSLRLRPEFKSTAAAAHGGIHAICGLPEPDHEGALNQRHPPWHLEQRHDVRPCERHALQGEVGSDVRVVEHHAGNVPPPRRHDGAGAVPVGPRDALRRQGAKFEFHGLEFKVLQLFYKMVGRDGQVDFGFGAPCFCMLVFLPIKRDGLRHLLRMAVTEPDFVTRCVPRSRQIVTPCKVPKFKFSSQLDAGGALAQLGLGAPFDPDAADLSRMAVNTPPAGLYVSTMRQKCAVEVDEEGTTAVEAMYSPSSPGYSPGYQPPRPPPMSFVAEHPFMFAIVEYKKAQVLFLGHVMDPSKEDQ.

Positions 324–348 (GTTAVEAMYSPSSPGYSPGYQPPRP) are RCL.

This sequence belongs to the serpin family.

This Oryza sativa subsp. japonica (Rice) protein is Putative non-inhibitory serpin-Z11.